The sequence spans 949 residues: Protein translocase subunit SecA 1 (949 aa).

Residues Gln-86, 104-108 (GEGKT), and Asp-493 contribute to the ATP site. Residues 869 to 949 (VDGGARERAP…AKPPKSVKKR (81 aa)) form a disordered region. Residues 925–934 (SRRERREAAR) show a composition bias toward basic and acidic residues.

The protein belongs to the SecA family. In terms of assembly, monomer and homodimer. Part of the essential Sec protein translocation apparatus which comprises SecA, SecYEG and auxiliary proteins SecDF. Other proteins may also be involved.

Its subcellular location is the cell membrane. The protein resides in the cytoplasm. It carries out the reaction ATP + H2O + cellular proteinSide 1 = ADP + phosphate + cellular proteinSide 2.. In terms of biological role, part of the Sec protein translocase complex. Interacts with the SecYEG preprotein conducting channel. Has a central role in coupling the hydrolysis of ATP to the transfer of proteins into and across the cell membrane, serving as an ATP-driven molecular motor driving the stepwise translocation of polypeptide chains across the membrane. This Mycobacterium bovis (strain ATCC BAA-935 / AF2122/97) protein is Protein translocase subunit SecA 1.